Reading from the N-terminus, the 281-residue chain is Ribosomal RNA small subunit methyltransferase A (281 aa).

S-adenosyl-L-methionine-binding residues include Asn36, Leu38, Gly63, Glu84, Asp109, and Asn127.

This sequence belongs to the class I-like SAM-binding methyltransferase superfamily. rRNA adenine N(6)-methyltransferase family. RsmA subfamily.

It is found in the cytoplasm. The catalysed reaction is adenosine(1518)/adenosine(1519) in 16S rRNA + 4 S-adenosyl-L-methionine = N(6)-dimethyladenosine(1518)/N(6)-dimethyladenosine(1519) in 16S rRNA + 4 S-adenosyl-L-homocysteine + 4 H(+). Its function is as follows. Specifically dimethylates two adjacent adenosines (A1518 and A1519) in the loop of a conserved hairpin near the 3'-end of 16S rRNA in the 30S particle. May play a critical role in biogenesis of 30S subunits. The protein is Ribosomal RNA small subunit methyltransferase A of Borreliella afzelii (strain PKo) (Borrelia afzelii).